The sequence spans 351 residues: Small ribosomal subunit biogenesis GTPase RsgA 1 (351 aa).

The CP-type G domain maps to 100–258 (LRTDAQIVAS…IIDTPGMREL (159 aa)). GTP-binding positions include 148–151 (SKVD) and 200–208 (GSSGAGKST). Positions 282, 287, 289, and 295 each coordinate Zn(2+).

Belongs to the TRAFAC class YlqF/YawG GTPase family. RsgA subfamily. Monomer. Associates with 30S ribosomal subunit, binds 16S rRNA. The cofactor is Zn(2+).

The protein localises to the cytoplasm. In terms of biological role, one of several proteins that assist in the late maturation steps of the functional core of the 30S ribosomal subunit. Helps release RbfA from mature subunits. May play a role in the assembly of ribosomal proteins into the subunit. Circularly permuted GTPase that catalyzes slow GTP hydrolysis, GTPase activity is stimulated by the 30S ribosomal subunit. This is Small ribosomal subunit biogenesis GTPase RsgA 1 from Oceanobacillus iheyensis (strain DSM 14371 / CIP 107618 / JCM 11309 / KCTC 3954 / HTE831).